The chain runs to 1134 residues: Envelopment polyprotein (1134 aa).

A signal peptide spans 1–18 (MGIWKWLVMASLVWPVLT). The Lumenal portion of the chain corresponds to 19–487 (LRNVYDMKIE…GFHGWATAAL (469 aa)). Cystine bridges form between Cys29–Cys151, Cys63–Cys157, Cys109–Cys128, Cys133–Cys138, Cys175–Cys185, Cys210–Cys247, Cys234–Cys351, and Cys380–Cys389. N-linked (GlcNAc...) asparagine; by host glycosylation is present at Asn134. Asn235 and Asn347 each carry an N-linked (GlcNAc...) asparagine; by host glycan. A glycan (N-linked (GlcNAc...) asparagine; by host) is linked at Asn399. 2 cysteine pairs are disulfide-bonded: Cys405/Cys424 and Cys452/Cys475. The helical transmembrane segment at 488 to 508 (LVTFCFGWVLIPAVTFIILAI) threads the bilayer. The Cytoplasmic segment spans residues 509 to 627 (LKFIANIFHT…LNLFRYKSRC (119 aa)). The interval 516–533 (FHTSNQENRLKSVLRKIK) is binding to the ribonucleoprotein. CCHC-type zinc fingers lie at residues 545-565 (CDVC…GVSC) and 570-591 (CPYC…YKVC). Binding to the ribonucleoprotein regions lie at residues 588–605 (YKVC…KKTV), 592–603 (QVTHRFRDDLKK), and 611–625 (TPGC…RYKS). The 24-residue stretch at 611-634 (TPGCYRTLNLFRYKSRCYIFTMWI) folds into the ITAM domain. Residues 615–618 (YRTL) carry the YxxL motif. Residues 628–648 (YIFTMWIFLLVLESILWAASA) form a helical membrane-spanning segment. Residues 649–1104 (SETPLTPVWN…EWISGIFSGN (456 aa)) are Lumenal-facing. 7 disulfides stabilise this stretch: Cys734/Cys769, Cys738/Cys776, Cys750/Cys884, Cys764/Cys895, Cys779/Cys903, Cys805/Cys814, and Cys822/Cys831. The tract at residues 756–776 (YQYETSWGCNPSDCPGCGTGC) is fusion loop. An N-linked (GlcNAc...) asparagine; by host glycan is attached at Asn927. Intrachain disulfides connect Cys969/Cys999, Cys992/Cys1044, Cys1009/Cys1014, Cys1045/Cys1050, and Cys1084/Cys1088. Residues 1105–1125 (WIVLIVLCVFLLFSLVLLSIL) traverse the membrane as a helical segment. Residues 1121–1134 (LLSILCPVRKHKKS) are binding to the ribonucleoprotein. At 1126–1134 (CPVRKHKKS) the chain is on the cytoplasmic side.

The protein belongs to the hantavirus envelope glycoprotein family. Homodimer. Homotetramer; forms heterotetrameric Gn-Gc spikes in the pre-fusion conformation. Interacts (via C-terminus) with the nucleoprotein. Interacts with host TUFM; this interaction contributes to the virus-induced degradation of mitochondria by autophagy, which leads to degradation of host MAVS and inhibition of type I interferon (IFN) responses. Interacts with host MAP1LC3B; this interaction contributes to the virus-induced degradation of mitochondria by autophagy, which leads to degradation of host MAVS and inhibition of type I interferon (IFN) responses. In terms of assembly, homodimer. Homotetramer; forms heterotetrameric Gn-Gc spikes in the pre-fusion conformation. Homotrimer; forms homotrimer in the post-fusion conformation at acidic pH. Interacts (via C-terminus) with the nucleoprotein. In terms of processing, envelope polyprotein precursor is quickly cleaved in vivo just after synthesis, presumably by host signal peptidase.

Its subcellular location is the virion membrane. It is found in the host cell surface. The protein localises to the host Golgi apparatus membrane. The protein resides in the host endoplasmic reticulum membrane. It localises to the host mitochondrion. Its function is as follows. Forms homotetramers with glycoprotein C at the surface of the virion. Attaches the virion to host cell receptors including integrin ITGAV/ITGB3. This attachment induces virion internalization predominantly through clathrin-dependent endocytosis. May also bind to host C1QBP for virus entry into the host cell. Mediates the assembly and budding of infectious virus particles through its interaction with the nucleocapsid protein and the viral genome. May dysregulate normal immune and endothelial cell responses through an ITAM motif. Translocates to mitochondria, binds to host TUFM and recruits MAP1LC3B. These interactions induce mitochondrial autophagy and therefore destruction of host MAVS leading to inhibition of type I interferon (IFN) responses. Concomitant breakdown of glycoprotein N is apparently prevented by the nucleoprotein that may inhibit Gn-stimulated autophagosome-lysosome fusion. Interacts with the viral genomic RNA. Functionally, forms homotetramers with glycoprotein N at the surface of the virion. Attaches the virion to host cell receptors including integrin ITGAV/ITGB3. This attachment induces virion internalization predominantly through clathrin-dependent endocytosis. May also bind to host C1QBP for virus entry into the host cell. Class II fusion protein that promotes fusion of viral membrane with host endosomal membrane after endocytosis of the virion. This is Envelopment polyprotein (GP) from Apodemus agrarius (Eurasian field mouse).